The chain runs to 167 residues: Ribosome maturation factor RimM (167 aa).

Positions 94–165 constitute a PRC barrel domain; that stretch reads ENEYYYSDII…TIRITPMEGL (72 aa).

This sequence belongs to the RimM family. As to quaternary structure, binds ribosomal protein uS19.

Its subcellular location is the cytoplasm. An accessory protein needed during the final step in the assembly of 30S ribosomal subunit, possibly for assembly of the head region. Essential for efficient processing of 16S rRNA. May be needed both before and after RbfA during the maturation of 16S rRNA. It has affinity for free ribosomal 30S subunits but not for 70S ribosomes. The polypeptide is Ribosome maturation factor RimM (Staphylococcus haemolyticus (strain JCSC1435)).